The primary structure comprises 194 residues: Mitochondrial import inner membrane translocase subunit Tim22 (194 aa).

Disulfide bonds link Cys-69–Cys-141 and Cys-160–Cys-179. 3 consecutive transmembrane segments (helical) span residues Val-74–Ile-94, Met-123–Val-143, and Ala-170–Asp-190.

Belongs to the Tim17/Tim22/Tim23 family. Component of the TIM22 complex, whose core is composed of TIMM22, associated with peripheral protein FXC1/TIMM10B and the 70 kDa heterohexamer. In most cases, the 70 kDa complex is composed of TIMM9 and TIMM10 (TIMM10A or TIMM10B). A small fraction of the 70 kDa complex is composed of TIMM8 (TIMM8A/DDP1 or TIMM8B/DDP2) and TIMM13. The TIM22 complex also contains AGK and TIMM29. Interacts directly with TIMM9, TIMM10A and FXC1/TIMM10B. Interacts (when oxidized) with TIMM29; interaction is direct. Post-translationally, disulfide bonds promote efficient assembly of the TIM22 complex.

The protein resides in the mitochondrion inner membrane. In terms of biological role, essential core component of the TIM22 complex, a complex that mediates the import and insertion of multi-pass transmembrane proteins into the mitochondrial inner membrane. In the TIM22 complex, it constitutes the voltage-activated and signal-gated channel. Forms a twin-pore translocase that uses the membrane potential as external driving force in 2 voltage-dependent steps. In Mus musculus (Mouse), this protein is Mitochondrial import inner membrane translocase subunit Tim22 (Timm22).